Consider the following 204-residue polypeptide: Probable nicotinate-nucleotide adenylyltransferase (204 aa).

This sequence belongs to the NadD family.

The catalysed reaction is nicotinate beta-D-ribonucleotide + ATP + H(+) = deamido-NAD(+) + diphosphate. It functions in the pathway cofactor biosynthesis; NAD(+) biosynthesis; deamido-NAD(+) from nicotinate D-ribonucleotide: step 1/1. In terms of biological role, catalyzes the reversible adenylation of nicotinate mononucleotide (NaMN) to nicotinic acid adenine dinucleotide (NaAD). The polypeptide is Probable nicotinate-nucleotide adenylyltransferase (Mycolicibacterium gilvum (strain PYR-GCK) (Mycobacterium gilvum (strain PYR-GCK))).